Consider the following 102-residue polypeptide: Cytochrome c3 (102 aa).

16 residues coordinate heme c: His26, His29, Cys34, Cys37, His38, His39, Cys50, Cys55, His56, His73, Cys81, Cys84, His85, Cys95, Cys98, and His99.

Heme serves as cofactor.

It localises to the periplasm. Participates in sulfate respiration coupled with phosphorylation by transferring electrons from the enzyme dehydrogenase to ferredoxin. The chain is Cytochrome c3 from Desulfovibrio desulfuricans.